The sequence spans 1663 residues: Cortactin-binding protein 2 (1663 aa).

Disordered stretches follow at residues 1–23, 203–222, 367–440, 454–478, and 498–616; these read MATD…AGAA, KKKT…RSTE, GASV…LHPG, GNAN…SPTS, and RFTS…PKPS. Residues 119–276 adopt a coiled-coil conformation; the sequence is KKMQERMSAQ…EQLKRGSDSK (158 aa). The span at 386 to 396 shows a compositional bias: low complexity; that stretch reads PSTGSTPDPTS. Arg-498 is modified (asymmetric dimethylarginine). Positions 583 to 593 are enriched in polar residues; it reads TVASTPSSLPQ. ANK repeat units follow at residues 709-739, 743-772, 776-805, 809-838, 842-871, and 912-942; these read GRPT…DINY, DGHS…QVNA, NGFT…NINH, GGQT…NRSV, DGWT…PAHG, and EGWT…EPER. Residues 1449–1482 are disordered; it reads KGESGAWRKVNTSPRRKSGRFSLPTWNKPDLSTE. At Ser-1524 the chain carries Phosphoserine. Residues 1581 to 1663 form a disordered region; sequence QKEVSPLSSH…KNEHLEKPNK (83 aa). The span at 1582–1599 shows a compositional bias: polar residues; it reads KEVSPLSSHQTTECSNSK. Over residues 1624-1638 the composition is skewed to low complexity; sequence SQNTKRSSSSSNTRQ. Over residues 1639-1648 the composition is skewed to polar residues; the sequence is IEINNNSKEV. The span at 1653-1663 shows a compositional bias: basic and acidic residues; sequence HKNEHLEKPNK.

In terms of assembly, interacts with CTTN/cortactin SH3 domain. Interacts with STRN, STRN4/zinedin and MOB4/phocein; this interactions mediate the association with the STRIPAK core complex and may regulate dendritic spine distribution of the STRIPAK complex in hippocampal neurons. Activation of glutamate receptors weakens the interaction with STRN and STRN4. Highest expression in brain. Also expressed in kidney, pancreas, lung, heart, liver, skeletal muscle and placenta.

It is found in the cytoplasm. Its subcellular location is the cell cortex. The protein resides in the cell projection. It localises to the dendritic spine. In terms of biological role, regulates the dendritic spine distribution of CTTN/cortactin in hippocampal neurons, and thus controls dendritic spinogenesis and dendritic spine maintenance. Associates with the striatin-interacting phosphatase and kinase (STRIPAK) core complex to regulate dendritic spine distribution of the STRIPAK complex in hippocampal neurons. The sequence is that of Cortactin-binding protein 2 from Homo sapiens (Human).